A 300-amino-acid chain; its full sequence is UDP-3-O-acyl-N-acetylglucosamine deacetylase (300 aa).

His78, His237, and Asp241 together coordinate Zn(2+). His264 serves as the catalytic Proton donor.

Belongs to the LpxC family. Requires Zn(2+) as cofactor.

The catalysed reaction is a UDP-3-O-[(3R)-3-hydroxyacyl]-N-acetyl-alpha-D-glucosamine + H2O = a UDP-3-O-[(3R)-3-hydroxyacyl]-alpha-D-glucosamine + acetate. The protein operates within glycolipid biosynthesis; lipid IV(A) biosynthesis; lipid IV(A) from (3R)-3-hydroxytetradecanoyl-[acyl-carrier-protein] and UDP-N-acetyl-alpha-D-glucosamine: step 2/6. Its function is as follows. Catalyzes the hydrolysis of UDP-3-O-myristoyl-N-acetylglucosamine to form UDP-3-O-myristoylglucosamine and acetate, the committed step in lipid A biosynthesis. This chain is UDP-3-O-acyl-N-acetylglucosamine deacetylase, found in Acinetobacter baumannii (strain AB307-0294).